The chain runs to 332 residues: Holliday junction branch migration complex subunit RuvB (332 aa).

The segment at 1 to 181 (MSRILDNEIM…FGITGHMEYY (181 aa)) is large ATPase domain (RuvB-L). Residues Leu-20, Arg-21, Gly-62, Lys-65, Thr-66, Thr-67, 128 to 130 (EDF), Arg-171, Tyr-181, and Arg-218 contribute to the ATP site. Thr-66 is a binding site for Mg(2+). The small ATPAse domain (RuvB-S) stretch occupies residues 182–252 (AHADLTEIVE…ITDKALTMLD (71 aa)). The tract at residues 255–332 (HEGLDYVDQK…EHLGYEYSEK (78 aa)) is head domain (RuvB-H). The DNA site is built by Arg-291, Arg-310, Arg-312, and Arg-315.

Belongs to the RuvB family. As to quaternary structure, homohexamer. Forms an RuvA(8)-RuvB(12)-Holliday junction (HJ) complex. HJ DNA is sandwiched between 2 RuvA tetramers; dsDNA enters through RuvA and exits via RuvB. An RuvB hexamer assembles on each DNA strand where it exits the tetramer. Each RuvB hexamer is contacted by two RuvA subunits (via domain III) on 2 adjacent RuvB subunits; this complex drives branch migration. In the full resolvosome a probable DNA-RuvA(4)-RuvB(12)-RuvC(2) complex forms which resolves the HJ.

It localises to the cytoplasm. It carries out the reaction ATP + H2O = ADP + phosphate + H(+). Its function is as follows. The RuvA-RuvB-RuvC complex processes Holliday junction (HJ) DNA during genetic recombination and DNA repair, while the RuvA-RuvB complex plays an important role in the rescue of blocked DNA replication forks via replication fork reversal (RFR). RuvA specifically binds to HJ cruciform DNA, conferring on it an open structure. The RuvB hexamer acts as an ATP-dependent pump, pulling dsDNA into and through the RuvAB complex. RuvB forms 2 homohexamers on either side of HJ DNA bound by 1 or 2 RuvA tetramers; 4 subunits per hexamer contact DNA at a time. Coordinated motions by a converter formed by DNA-disengaged RuvB subunits stimulates ATP hydrolysis and nucleotide exchange. Immobilization of the converter enables RuvB to convert the ATP-contained energy into a lever motion, pulling 2 nucleotides of DNA out of the RuvA tetramer per ATP hydrolyzed, thus driving DNA branch migration. The RuvB motors rotate together with the DNA substrate, which together with the progressing nucleotide cycle form the mechanistic basis for DNA recombination by continuous HJ branch migration. Branch migration allows RuvC to scan DNA until it finds its consensus sequence, where it cleaves and resolves cruciform DNA. The sequence is that of Holliday junction branch migration complex subunit RuvB from Streptococcus pneumoniae serotype 2 (strain D39 / NCTC 7466).